The following is a 186-amino-acid chain: TATA-box-binding protein F (186 aa).

2 repeat units span residues 10 to 86 (IENV…FDDL) and 101 to 179 (VQNI…NDRL).

This sequence belongs to the TBP family.

Functionally, general factor that plays a role in the activation of archaeal genes transcribed by RNA polymerase. Binds specifically to the TATA box promoter element which lies close to the position of transcription initiation. The chain is TATA-box-binding protein F (tbpF) from Halobacterium salinarum (strain ATCC 700922 / JCM 11081 / NRC-1) (Halobacterium halobium).